A 527-amino-acid polypeptide reads, in one-letter code: Peptide chain release factor 3 (527 aa).

A tr-type G domain is found at 9–277 (AKRRTFAIIS…AVVDWAPRPL (269 aa)). GTP contacts are provided by residues 18–25 (SHPDAGKT), 86–90 (DTPGH), and 140–143 (NKLD).

Belongs to the TRAFAC class translation factor GTPase superfamily. Classic translation factor GTPase family. PrfC subfamily.

Its subcellular location is the cytoplasm. In terms of biological role, increases the formation of ribosomal termination complexes and stimulates activities of RF-1 and RF-2. It binds guanine nucleotides and has strong preference for UGA stop codons. It may interact directly with the ribosome. The stimulation of RF-1 and RF-2 is significantly reduced by GTP and GDP, but not by GMP. This is Peptide chain release factor 3 from Pseudomonas fluorescens (strain Pf0-1).